The following is an 808-amino-acid chain: Homeobox-leucine zipper protein HDG1 (808 aa).

Residues 57-121 form a disordered region; that stretch reads LQTNGEMSRN…KRYHRHTPKQ (65 aa). Residues 79-90 show a composition bias toward basic and acidic residues; that stretch reads SRGEDVESRSES. Over residues 108-119 the composition is skewed to basic residues; the sequence is LKKKKRYHRHTP. A DNA-binding region (homeobox) is located at residues 110–169; the sequence is KKKRYHRHTPKQIQDLESVFKECAHPDEKQRLDLSRRLNLDPRQVKFWFQNRRTQMKTQI. Residues 158 to 233 are a coiled coil; sequence FQNRRTQMKT…SRLKDELDRV (76 aa). The START domain maps to 310-541; that stretch reads DFDQRSRYLD…LQRQCECLTI (232 aa).

This sequence belongs to the HD-ZIP homeobox family. Class IV subfamily. In terms of assembly, interacts with CFL1. Binds with BBM. Expressed in trichomes forming at the base of young leaves, in endodermal cell lines around emergent lateral roots and in the epidermal layer of the stamen filament.

The protein localises to the nucleus. Probable transcription factor. Promotes cuticle development probably by modulating the expression of the downstream genes BDG and FDH, possibly repressed in a CFL1-dependent manner. Involved, together with PDF2, in the regulation of flower organs development by promoting the expression of APETALA 3 (AP3) in the epidermis and internal cell layers of developing flowers. In opposition to BBM, seems to promote cell differentiation and giant cell identity via transcriptional repression of meristem and cell proliferation genes. This is Homeobox-leucine zipper protein HDG1 from Arabidopsis thaliana (Mouse-ear cress).